Reading from the N-terminus, the 225-residue chain is ATP-dependent dethiobiotin synthetase BioD (225 aa).

12–17 serves as a coordination point for ATP; sequence GVGKTV. Threonine 16 is a Mg(2+) binding site. Lysine 37 is an active-site residue. A substrate-binding site is contributed by threonine 41. Residues aspartate 49, 108–111, and 197–199 contribute to the ATP site; these read EGAG and PAG. Mg(2+) is bound by residues aspartate 49 and glutamate 108.

Belongs to the dethiobiotin synthetase family. As to quaternary structure, homodimer. Requires Mg(2+) as cofactor.

It localises to the cytoplasm. It catalyses the reaction (7R,8S)-7,8-diammoniononanoate + CO2 + ATP = (4R,5S)-dethiobiotin + ADP + phosphate + 3 H(+). It functions in the pathway cofactor biosynthesis; biotin biosynthesis; biotin from 7,8-diaminononanoate: step 1/2. Its function is as follows. Catalyzes a mechanistically unusual reaction, the ATP-dependent insertion of CO2 between the N7 and N8 nitrogen atoms of 7,8-diaminopelargonic acid (DAPA, also called 7,8-diammoniononanoate) to form a ureido ring. This chain is ATP-dependent dethiobiotin synthetase BioD, found in Mycolicibacterium smegmatis (strain ATCC 700084 / mc(2)155) (Mycobacterium smegmatis).